Consider the following 187-residue polypeptide: Plasmodium-specific hydrophobic abundant protein (187 aa).

A signal peptide spans 1–18; that stretch reads MMKYVFVALCLFAVVALA.

It to HAP-S protein.

Its subcellular location is the membrane. The polypeptide is Plasmodium-specific hydrophobic abundant protein (Physarum polycephalum (Slime mold)).